The primary structure comprises 198 residues: V-type ATP synthase subunit E (198 aa).

Belongs to the V-ATPase E subunit family.

In terms of biological role, produces ATP from ADP in the presence of a proton gradient across the membrane. This is V-type ATP synthase subunit E from Clostridium novyi (strain NT).